The primary structure comprises 1078 residues: Phosphatidylinositol-3,5-bisphosphate 3-phosphatase MTMR4 (1078 aa).

Residues Asp-154–Tyr-571 enclose the Myotubularin phosphatase domain. The interval Arg-267–Asp-290 is disordered. A compositionally biased stretch (low complexity) spans Asn-270–Ser-282. The a 1,2-diacyl-sn-glycero-3-phospho-(1D-myo-inositol-3,5-bisphosphate) site is built by Asn-321, Asn-346, and Ile-347. Asn-321, Asn-346, and Ile-347 together coordinate a 1,2-diacyl-sn-glycero-3-phospho-(1D-myo-inositol-3-phosphate). The Phosphocysteine intermediate role is filled by Cys-408. A 1,2-diacyl-sn-glycero-3-phospho-(1D-myo-inositol-3,5-bisphosphate)-binding residues include Ser-409, Asp-410, Gly-411, Trp-412, Asp-413, Arg-414, Lys-450, and Arg-454. 6 residues coordinate a 1,2-diacyl-sn-glycero-3-phospho-(1D-myo-inositol-3-phosphate): Ser-409, Asp-410, Gly-411, Trp-412, Asp-413, and Arg-414. Arg-454 lines the a 1,2-diacyl-sn-glycero-3-phospho-(1D-myo-inositol-3-phosphate) pocket. Over residues Ser-629 to Lys-648 the composition is skewed to polar residues. The disordered stretch occupies residues Ser-629–Asn-694. Positions Val-904–Ile-935 form a coiled coil. The interval Asp-960 to Glu-982 is disordered. A compositionally biased stretch (basic and acidic residues) spans Tyr-968–Glu-982. The FYVE-type zinc-finger motif lies at Asp-997 to Gln-1057. Zn(2+)-binding residues include Cys-1003, Cys-1006, Cys-1019, Cys-1022, Cys-1027, Cys-1030, Cys-1049, and Cys-1052.

Belongs to the protein-tyrosine phosphatase family. Non-receptor class myotubularin subfamily. As to quaternary structure, homooligomeric.

It is found in the early endosome membrane. The protein resides in the recycling endosome membrane. Its subcellular location is the late endosome membrane. The protein localises to the cytoplasmic vesicle. It localises to the phagosome membrane. It carries out the reaction a 1,2-diacyl-sn-glycero-3-phospho-(1D-myo-inositol-3-phosphate) + H2O = a 1,2-diacyl-sn-glycero-3-phospho-(1D-myo-inositol) + phosphate. It catalyses the reaction a 1,2-diacyl-sn-glycero-3-phospho-(1D-myo-inositol-3,5-bisphosphate) + H2O = a 1,2-diacyl-sn-glycero-3-phospho-(1D-myo-inositol-5-phosphate) + phosphate. The catalysed reaction is 1,2-dioctanoyl-sn-glycero-3-phospho-(1-D-myo-inositol-3-phosphate) + H2O = 1,2-dioctanoyl-sn-glycero-3-phospho-(1D-myo-inositol) + phosphate. The enzyme catalyses 1,2-dioctanoyl-sn-glycero-3-phospho-(1D-myo-inositol-3,5-bisphosphate) + H2O = 1,2-dioctanoyl-sn-glycero-3-phospho-(1D-myo-inositol-5-phosphate) + phosphate. Its function is as follows. Lipid phosphatase that specifically dephosphorylates the D-3 position of phosphatidylinositol 3-phosphate and phosphatidylinositol 3,5-bisphosphate, generating phosphatidylinositol and phosphatidylinositol 5-phosphate. Decreases the levels of phosphatidylinositol 3-phosphate, a phospholipid found in cell membranes where it acts as key regulator of both cell signaling and intracellular membrane traffic, in a subset of endosomal membranes to negatively regulate both endocytic recycling and trafficking and/or maturation of endosomes toward lysosomes. Through phosphatidylinositol 3-phosphate turnover in phagosome membranes regulates phagocytosis and phagosome maturation. By decreasing phosphatidylinositol 3-monophosphate (PI3P) levels in immune cells it can also regulate the innate immune response. Beside its lipid phosphatase activity, can also function as a molecular adapter to regulate midbody abscission during mitotic cytokinesis. Can also negatively regulate TGF-beta and BMP signaling through Smad proteins dephosphorylation and retention in endosomes. This Xenopus laevis (African clawed frog) protein is Phosphatidylinositol-3,5-bisphosphate 3-phosphatase MTMR4 (mtmr4).